A 262-amino-acid polypeptide reads, in one-letter code: Matrix protein (262 aa).

The tract at residues 219–243 (PSPAEGKIGRIKRPTERKEDTPSMT) is disordered.

This sequence belongs to the nucleorhabdovirus type-1 matrix protein family. As to quaternary structure, homomultimer. Interacts with nucleoprotein and with the cytoplasmic domain of glycoprotein.

Its subcellular location is the virion membrane. The protein localises to the host endomembrane system. In terms of biological role, plays a major role in assembly and budding of virion. Completely covers the ribonucleoprotein coil and keep it in condensed bullet-shaped form. Inhibits viral transcription and stimulates replication. The polypeptide is Matrix protein (M) (Rice yellow stunt virus (RYSV)).